A 176-amino-acid polypeptide reads, in one-letter code: MMAEAKLIYPRYAVVRLRGIPTTPRDIARTLDLLRLRRKFTMVVVPGSPSIMGMIQEVNDWVTWGEIEADTLAEVLKKRGRIVGDKPLTLEYLKKWGWQSFEEVALAYVAGEIERLSCGRYYAREGQRPPCIPYLKPFFRLHPPRGGLNSVKLHFAAGGDLGYRGPLINDLIRRML.

The protein belongs to the universal ribosomal protein uL30 family. In terms of assembly, part of the 50S ribosomal subunit.

The polypeptide is Large ribosomal subunit protein uL30 (Pyrobaculum arsenaticum (strain DSM 13514 / JCM 11321 / PZ6)).